We begin with the raw amino-acid sequence, 114 residues long: Cholecystokinin (114 aa).

The first 20 residues, 1–20, serve as a signal peptide directing secretion; that stretch reads MNGGLCLCVLMAVLAAGTLA. Position 96 is a sulfotyrosine (tyrosine 96). Phenylalanine 102 bears the Phenylalanine amide mark. The propeptide occupies 106–114; sequence SAEEYEYTS. Sulfotyrosine occurs at positions 110 and 112.

Belongs to the gastrin/cholecystokinin family. As to quaternary structure, binds to CCK-A receptors in the pancreas and CCK-B receptors in the brain. The precursor is cleaved by proteases to produce a number of active cholecystokinins. Brain contains CCK-octapeptide (CCK8) and several CCK-desoctapeptides; whereas pig gut contains intact CCK33, CCK39, and CCK58 as well as CCK-octapeptide and the CCK-desoctapeptides. Distribution differences are due to tissue-specific post-translational processing events. In terms of processing, the precursor is cleaved by ACE, which removes the Gly-Arg-Arg peptide at the C-terminus, leading to mature hormone. Synthesized in both cerebral cortex and duodenal mucosa.

It localises to the secreted. Functionally, this peptide hormone induces gall bladder contraction and the release of pancreatic enzymes in the gut. Its function in the brain is not clear. Binding to CCK-A receptors stimulates amylase release from the pancreas, binding to CCK-B receptors stimulates gastric acid secretion. This is Cholecystokinin (CCK) from Sus scrofa (Pig).